Reading from the N-terminus, the 968-residue chain is Phosphoenolpyruvate carboxylase (968 aa).

Serine 11 bears the Phosphoserine mark. Active-site residues include histidine 172 and lysine 602.

It belongs to the PEPCase type 1 family. As to quaternary structure, homotetramer. Requires Mg(2+) as cofactor.

It localises to the cytoplasm. The catalysed reaction is oxaloacetate + phosphate = phosphoenolpyruvate + hydrogencarbonate. With respect to regulation, by light-reversible phosphorylation. Functionally, through the carboxylation of phosphoenolpyruvate (PEP) it forms oxaloacetate, a four-carbon dicarboxylic acid source for the tricarboxylic acid cycle. The polypeptide is Phosphoenolpyruvate carboxylase (Phaseolus vulgaris (Kidney bean)).